The sequence spans 559 residues: Membrane protein insertase YidC (559 aa).

Residues 6–26 form a helical membrane-spanning segment; that stretch reads TVLWMIFSFSLLLLWNNWQIH. The interval 34–80 is disordered; the sequence is GGPSPEQNAPATANNQAATNPASNTPAVPNAPAATSAPSSVPGSTAP. Residues 42 to 80 show a composition bias toward low complexity; the sequence is APATANNQAATNPASNTPAVPNAPAATSAPSSVPGSTAP. 4 consecutive transmembrane segments (helical) span residues 367-387, 441-461, 480-500, and 510-530; these read LLGNWGWTIVALTVIIKAVFY, LPMVVQIPVFIALYWVLLASV, PYFILPAVMMATMFLQIKLNP, and VMMVMPLVFGGMMFFFPAGLV.

It belongs to the OXA1/ALB3/YidC family. Type 1 subfamily. As to quaternary structure, interacts with the Sec translocase complex via SecD. Specifically interacts with transmembrane segments of nascent integral membrane proteins during membrane integration.

It localises to the cell inner membrane. Its function is as follows. Required for the insertion and/or proper folding and/or complex formation of integral membrane proteins into the membrane. Involved in integration of membrane proteins that insert both dependently and independently of the Sec translocase complex, as well as at least some lipoproteins. Aids folding of multispanning membrane proteins. In Bordetella avium (strain 197N), this protein is Membrane protein insertase YidC.